Reading from the N-terminus, the 486-residue chain is Malonate-semialdehyde dehydrogenase 2 (486 aa).

Phenylalanine 154, lysine 178, glutamate 181, arginine 182, and serine 231 together coordinate NAD(+). The Nucleophile role is filled by cysteine 286. Glutamate 386 lines the NAD(+) pocket.

The protein belongs to the aldehyde dehydrogenase family. IolA subfamily. As to quaternary structure, homotetramer.

The catalysed reaction is 3-oxopropanoate + NAD(+) + CoA + H2O = hydrogencarbonate + acetyl-CoA + NADH + H(+). It catalyses the reaction 2-methyl-3-oxopropanoate + NAD(+) + CoA + H2O = propanoyl-CoA + hydrogencarbonate + NADH + H(+). It participates in polyol metabolism; myo-inositol degradation into acetyl-CoA; acetyl-CoA from myo-inositol: step 7/7. Its function is as follows. Catalyzes the oxidation of malonate semialdehyde (MSA) and methylmalonate semialdehyde (MMSA) into acetyl-CoA and propanoyl-CoA, respectively. Is involved in a myo-inositol catabolic pathway. Bicarbonate, and not CO2, is the end-product of the enzymatic reaction. In Oceanobacillus iheyensis (strain DSM 14371 / CIP 107618 / JCM 11309 / KCTC 3954 / HTE831), this protein is Malonate-semialdehyde dehydrogenase 2.